Consider the following 499-residue polypeptide: Glycerol kinase (499 aa).

Threonine 12 contacts ADP. Threonine 12, threonine 13, and serine 14 together coordinate ATP. Threonine 12 serves as a coordination point for sn-glycerol 3-phosphate. Position 16 (arginine 16) interacts with ADP. Residues arginine 82, glutamate 83, tyrosine 134, and aspartate 245 each contribute to the sn-glycerol 3-phosphate site. Glycerol contacts are provided by arginine 82, glutamate 83, tyrosine 134, aspartate 245, and glutamine 246. ADP-binding residues include threonine 267 and glycine 311. Residues threonine 267, glycine 311, glutamine 315, and glycine 412 each coordinate ATP. Residues glycine 412 and asparagine 416 each contribute to the ADP site.

It belongs to the FGGY kinase family.

It carries out the reaction glycerol + ATP = sn-glycerol 3-phosphate + ADP + H(+). The protein operates within polyol metabolism; glycerol degradation via glycerol kinase pathway; sn-glycerol 3-phosphate from glycerol: step 1/1. Inhibited by fructose 1,6-bisphosphate (FBP). Its function is as follows. Key enzyme in the regulation of glycerol uptake and metabolism. Catalyzes the phosphorylation of glycerol to yield sn-glycerol 3-phosphate. This chain is Glycerol kinase, found in Brucella anthropi (strain ATCC 49188 / DSM 6882 / CCUG 24695 / JCM 21032 / LMG 3331 / NBRC 15819 / NCTC 12168 / Alc 37) (Ochrobactrum anthropi).